The sequence spans 166 residues: Small ribosomal subunit protein uS5 (166 aa).

Positions 11–74 (LQEKLIAVNR…EQAKRNLSKV (64 aa)) constitute an S5 DRBM domain.

The protein belongs to the universal ribosomal protein uS5 family. In terms of assembly, part of the 30S ribosomal subunit. Contacts proteins S4 and S8.

Its function is as follows. With S4 and S12 plays an important role in translational accuracy. Located at the back of the 30S subunit body where it stabilizes the conformation of the head with respect to the body. The polypeptide is Small ribosomal subunit protein uS5 (Aeromonas salmonicida (strain A449)).